The primary structure comprises 161 residues: Dermonecrotic toxin LarSicTox-alphaI-1 (161 aa).

Belongs to the arthropod phospholipase D family. Class II subfamily. Mg(2+) serves as cofactor. In terms of processing, contains 2 disulfide bonds. As to expression, expressed by the venom gland.

Its subcellular location is the secreted. The enzyme catalyses an N-(acyl)-sphingosylphosphocholine = an N-(acyl)-sphingosyl-1,3-cyclic phosphate + choline. It catalyses the reaction an N-(acyl)-sphingosylphosphoethanolamine = an N-(acyl)-sphingosyl-1,3-cyclic phosphate + ethanolamine. The catalysed reaction is a 1-acyl-sn-glycero-3-phosphocholine = a 1-acyl-sn-glycero-2,3-cyclic phosphate + choline. It carries out the reaction a 1-acyl-sn-glycero-3-phosphoethanolamine = a 1-acyl-sn-glycero-2,3-cyclic phosphate + ethanolamine. In terms of biological role, dermonecrotic toxins cleave the phosphodiester linkage between the phosphate and headgroup of certain phospholipids (sphingolipid and lysolipid substrates), forming an alcohol (often choline) and a cyclic phosphate. This toxin acts on sphingomyelin (SM). It may also act on ceramide phosphoethanolamine (CPE), lysophosphatidylcholine (LPC) and lysophosphatidylethanolamine (LPE), but not on lysophosphatidylserine (LPS), and lysophosphatidylglycerol (LPG). It acts by transphosphatidylation, releasing exclusively cyclic phosphate products as second products. Induces dermonecrosis, hemolysis, increased vascular permeability, edema, inflammatory response, and platelet aggregation. This is Dermonecrotic toxin LarSicTox-alphaI-1 from Loxosceles arizonica (Arizona brown spider).